The primary structure comprises 964 residues: Translation initiation factor IF-2 (964 aa).

Residues 105–119 (AALAESEASEAAPVV) show a composition bias toward low complexity. 2 disordered regions span residues 105–133 (AALAESEASEAAPVVDAEEVARREEEHRR) and 146–378 (KARQ…PTEP). Composition is skewed to basic and acidic residues over residues 123–133 (EVARREEEHRR), 146–183 (KARQEAMEREEAERRARQEAAEAEQKRQAELAAKKAEE), 197–253 (EAPR…RAIR), and 266–278 (PAERKAEEVKKAE). The span at 288-302 (KPAGEARPAAAKKPA) shows a compositional bias: low complexity. A compositionally biased stretch (pro residues) spans 303 to 313 (APAPAAAPAPG). Residues 464-633 (TRPPVVTVMG…LLQAEVLELK (170 aa)) form the tr-type G domain. The segment at 473 to 480 (GHVDHGKT) is G1. GTP is bound at residue 473–480 (GHVDHGKT). Residues 498–502 (GITQH) form a G2 region. Residues 519–522 (DTPG) are G3. GTP is bound by residues 519–523 (DTPGH) and 573–576 (TKVD). The interval 573–576 (TKVD) is G4. Positions 609-611 (SAK) are G5.

This sequence belongs to the TRAFAC class translation factor GTPase superfamily. Classic translation factor GTPase family. IF-2 subfamily.

It localises to the cytoplasm. Its function is as follows. One of the essential components for the initiation of protein synthesis. Protects formylmethionyl-tRNA from spontaneous hydrolysis and promotes its binding to the 30S ribosomal subunits. Also involved in the hydrolysis of GTP during the formation of the 70S ribosomal complex. This is Translation initiation factor IF-2 from Ralstonia pickettii (strain 12J).